A 264-amino-acid polypeptide reads, in one-letter code: MAEIDPTQLELERQGILLTTVNRFYNWGRRSSIWPMAFGLACCAIEMMAFGLSRYDVARFGAELFRASPRQADLMIVAGTVTKKMAPQVVRLYNQMAEPRYVISMGACATSGGPFRDGYNVLRGIDLLIPVDVYVPGCPPRPEALLHALMTLQEQIDRQKLGRVRWYGSGDKPQTGDFPVPTFGAKGLEIDGKLVDPVGGLPLLSPYTSPSHGEHRSGQIEHPEVVRQFPIMDPEVELENALKARGIAPEIAADDLKRSVVNDA.

Residues C42, C43, C108, and C138 each contribute to the [4Fe-4S] cluster site.

This sequence belongs to the complex I 20 kDa subunit family. NDH-1 is composed of 14 different subunits. Subunits NuoB, C, D, E, F, and G constitute the peripheral sector of the complex. [4Fe-4S] cluster is required as a cofactor.

It localises to the cell membrane. It carries out the reaction a quinone + NADH + 5 H(+)(in) = a quinol + NAD(+) + 4 H(+)(out). NDH-1 shuttles electrons from NADH, via FMN and iron-sulfur (Fe-S) centers, to quinones in the respiratory chain. The immediate electron acceptor for the enzyme in this species is believed to be ubiquinone. Couples the redox reaction to proton translocation (for every two electrons transferred, four hydrogen ions are translocated across the cytoplasmic membrane), and thus conserves the redox energy in a proton gradient. This Chloroflexus aurantiacus (strain ATCC 29366 / DSM 635 / J-10-fl) protein is NADH-quinone oxidoreductase subunit B 1.